The primary structure comprises 783 residues: LPS-assembly protein LptD (783 aa).

An N-terminal signal peptide occupies residues 1-24 (MSCFSRTFLAASISAALFAPQIQA).

This sequence belongs to the LptD family. Component of the lipopolysaccharide transport and assembly complex. Interacts with LptE and LptA.

Its subcellular location is the cell outer membrane. Together with LptE, is involved in the assembly of lipopolysaccharide (LPS) at the surface of the outer membrane. The chain is LPS-assembly protein LptD from Vibrio cholerae serotype O1 (strain ATCC 39315 / El Tor Inaba N16961).